The sequence spans 508 residues: Glycerol kinase (508 aa).

Thr-15 serves as a coordination point for ADP. Thr-15, Ser-16, and Ser-17 together coordinate ATP. Residue Thr-15 coordinates sn-glycerol 3-phosphate. Residue Arg-19 participates in ADP binding. 4 residues coordinate sn-glycerol 3-phosphate: Arg-85, Glu-86, Tyr-138, and Asp-251. Positions 85, 86, 138, 251, and 252 each coordinate glycerol. 3 residues coordinate ADP: Thr-273, Gly-317, and Gly-419. ATP contacts are provided by Thr-273, Gly-317, and Gly-419.

The protein belongs to the FGGY kinase family.

It carries out the reaction glycerol + ATP = sn-glycerol 3-phosphate + ADP + H(+). It functions in the pathway polyol metabolism; glycerol degradation via glycerol kinase pathway; sn-glycerol 3-phosphate from glycerol: step 1/1. With respect to regulation, inhibited by fructose 1,6-bisphosphate (FBP). In terms of biological role, key enzyme in the regulation of glycerol uptake and metabolism. Catalyzes the phosphorylation of glycerol to yield sn-glycerol 3-phosphate. The sequence is that of Glycerol kinase from Mycoplasma pneumoniae (strain ATCC 29342 / M129 / Subtype 1) (Mycoplasmoides pneumoniae).